The chain runs to 208 residues: V-type ATP synthase subunit D (208 aa).

This sequence belongs to the V-ATPase D subunit family.

Produces ATP from ADP in the presence of a proton gradient across the membrane. This is V-type ATP synthase subunit D from Streptococcus pyogenes serotype M3 (strain ATCC BAA-595 / MGAS315).